Here is a 36-residue protein sequence, read N- to C-terminus: Photosystem II reaction center protein Y (36 aa).

Over 1 to 4 the chain is Lumenal; sequence MDSR. The chain crosses the membrane as a helical span at residues 5–23; that stretch reads LLVVLIPVLAAASWAVYNI. The Stromal segment spans residues 24–36; the sequence is GRVALQQFRKMTS.

The protein belongs to the PsbY family. PSII is composed of 1 copy each of membrane proteins PsbA, PsbB, PsbC, PsbD, PsbE, PsbF, PsbH, PsbI, PsbJ, PsbK, PsbL, PsbM, PsbT, PsbX, PsbY, PsbZ, Psb30/Ycf12, at least 3 peripheral proteins of the oxygen-evolving complex and a large number of cofactors. It forms dimeric complexes.

The protein resides in the plastid. It localises to the chloroplast thylakoid membrane. Loosely associated component of the core of photosystem II (PSII), it is not always seen in crystals. PSII is a light-driven water plastoquinone oxidoreductase, using light energy to abstract electrons from H(2)O, generating a proton gradient subsequently used for ATP formation. The protein is Photosystem II reaction center protein Y of Pyropia yezoensis (Susabi-nori).